Here is a 212-residue protein sequence, read N- to C-terminus: Glycerol-3-phosphate acyltransferase (212 aa).

5 helical membrane passes run 3-23 (ILLAALVAYLIGSVSFAVIVS), 51-71 (KAAILTLVGDAFKGWLAVWLA), 78-98 (DVAVAWVAIAVFVGHLYPVFF), 115-135 (AVHPVLGLATALTWLIVAFFF), and 139-159 (SLAALVAAVFAPVFDVFLFGT).

Belongs to the PlsY family. Probably interacts with PlsX.

Its subcellular location is the cell inner membrane. It catalyses the reaction an acyl phosphate + sn-glycerol 3-phosphate = a 1-acyl-sn-glycero-3-phosphate + phosphate. It participates in lipid metabolism; phospholipid metabolism. Catalyzes the transfer of an acyl group from acyl-phosphate (acyl-PO(4)) to glycerol-3-phosphate (G3P) to form lysophosphatidic acid (LPA). This enzyme utilizes acyl-phosphate as fatty acyl donor, but not acyl-CoA or acyl-ACP. The sequence is that of Glycerol-3-phosphate acyltransferase from Burkholderia vietnamiensis (strain G4 / LMG 22486) (Burkholderia cepacia (strain R1808)).